The chain runs to 121 residues: Large ribosomal subunit protein bL12 (121 aa).

This sequence belongs to the bacterial ribosomal protein bL12 family. In terms of assembly, homodimer. Part of the ribosomal stalk of the 50S ribosomal subunit. Forms a multimeric L10(L12)X complex, where L10 forms an elongated spine to which 2 to 4 L12 dimers bind in a sequential fashion. Binds GTP-bound translation factors.

Functionally, forms part of the ribosomal stalk which helps the ribosome interact with GTP-bound translation factors. Is thus essential for accurate translation. The sequence is that of Large ribosomal subunit protein bL12 from Xanthomonas euvesicatoria pv. vesicatoria (strain 85-10) (Xanthomonas campestris pv. vesicatoria).